Reading from the N-terminus, the 542-residue chain is Glutamyl-tRNA(Gln) amidotransferase subunit B, mitochondrial (542 aa).

The N-terminal 66 residues, 1–66 (MRVFRRFYQV…PNSHTSFFDI (66 aa)), are a transit peptide targeting the mitochondrion.

The protein belongs to the GatB/GatE family. GatB subfamily. As to quaternary structure, subunit of the heterotrimeric GatFAB amidotransferase (AdT) complex, composed of A, B and F subunits.

The protein resides in the mitochondrion. The catalysed reaction is L-glutamyl-tRNA(Gln) + L-glutamine + ATP + H2O = L-glutaminyl-tRNA(Gln) + L-glutamate + ADP + phosphate + H(+). Allows the formation of correctly charged Gln-tRNA(Gln) through the transamidation of misacylated Glu-tRNA(Gln) in the mitochondria. The reaction takes place in the presence of glutamine and ATP through an activated gamma-phospho-Glu-tRNA(Gln). The sequence is that of Glutamyl-tRNA(Gln) amidotransferase subunit B, mitochondrial from Zygosaccharomyces rouxii (strain ATCC 2623 / CBS 732 / NBRC 1130 / NCYC 568 / NRRL Y-229).